The chain runs to 863 residues: Aminopeptidase N (863 aa).

Substrate contacts are provided by residues glutamate 124 and 263–267; that span reads GAMEN. A Zn(2+)-binding site is contributed by histidine 299. Glutamate 300 functions as the Proton acceptor in the catalytic mechanism. Residues histidine 303 and glutamate 322 each coordinate Zn(2+).

The protein belongs to the peptidase M1 family. The cofactor is Zn(2+).

It catalyses the reaction Release of an N-terminal amino acid, Xaa-|-Yaa- from a peptide, amide or arylamide. Xaa is preferably Ala, but may be most amino acids including Pro (slow action). When a terminal hydrophobic residue is followed by a prolyl residue, the two may be released as an intact Xaa-Pro dipeptide.. Functionally, aminopeptidase N is involved in the degradation of intracellular peptides generated by protein breakdown during normal growth as well as in response to nutrient starvation. The protein is Aminopeptidase N (pepN) of Caulobacter vibrioides (strain ATCC 19089 / CIP 103742 / CB 15) (Caulobacter crescentus).